A 350-amino-acid polypeptide reads, in one-letter code: 4-hydroxy-3-methylbut-2-enyl diphosphate reductase (350 aa).

C36 serves as a coordination point for [4Fe-4S] cluster. 2 residues coordinate (2E)-4-hydroxy-3-methylbut-2-enyl diphosphate: H65 and H101. Dimethylallyl diphosphate contacts are provided by H65 and H101. Residues H65 and H101 each coordinate isopentenyl diphosphate. Position 123 (C123) interacts with [4Fe-4S] cluster. Residue H151 participates in (2E)-4-hydroxy-3-methylbut-2-enyl diphosphate binding. H151 contributes to the dimethylallyl diphosphate binding site. H151 lines the isopentenyl diphosphate pocket. The active-site Proton donor is E153. Residue T192 coordinates (2E)-4-hydroxy-3-methylbut-2-enyl diphosphate. C222 contributes to the [4Fe-4S] cluster binding site. (2E)-4-hydroxy-3-methylbut-2-enyl diphosphate contacts are provided by S250, S251, N252, and S295. Dimethylallyl diphosphate is bound by residues S250, S251, N252, and S295. S250, S251, N252, and S295 together coordinate isopentenyl diphosphate.

It belongs to the IspH family. It depends on [4Fe-4S] cluster as a cofactor.

It carries out the reaction isopentenyl diphosphate + 2 oxidized [2Fe-2S]-[ferredoxin] + H2O = (2E)-4-hydroxy-3-methylbut-2-enyl diphosphate + 2 reduced [2Fe-2S]-[ferredoxin] + 2 H(+). The catalysed reaction is dimethylallyl diphosphate + 2 oxidized [2Fe-2S]-[ferredoxin] + H2O = (2E)-4-hydroxy-3-methylbut-2-enyl diphosphate + 2 reduced [2Fe-2S]-[ferredoxin] + 2 H(+). It participates in isoprenoid biosynthesis; dimethylallyl diphosphate biosynthesis; dimethylallyl diphosphate from (2E)-4-hydroxy-3-methylbutenyl diphosphate: step 1/1. It functions in the pathway isoprenoid biosynthesis; isopentenyl diphosphate biosynthesis via DXP pathway; isopentenyl diphosphate from 1-deoxy-D-xylulose 5-phosphate: step 6/6. In terms of biological role, catalyzes the conversion of 1-hydroxy-2-methyl-2-(E)-butenyl 4-diphosphate (HMBPP) into a mixture of isopentenyl diphosphate (IPP) and dimethylallyl diphosphate (DMAPP). Acts in the terminal step of the DOXP/MEP pathway for isoprenoid precursor biosynthesis. This Rhizobium meliloti (strain 1021) (Ensifer meliloti) protein is 4-hydroxy-3-methylbut-2-enyl diphosphate reductase.